Consider the following 202-residue polypeptide: ATP-dependent Clp protease proteolytic subunit (202 aa).

The active-site Nucleophile is serine 106. Histidine 131 is an active-site residue.

This sequence belongs to the peptidase S14 family. Fourteen ClpP subunits assemble into 2 heptameric rings which stack back to back to give a disk-like structure with a central cavity, resembling the structure of eukaryotic proteasomes.

The protein localises to the cytoplasm. The catalysed reaction is Hydrolysis of proteins to small peptides in the presence of ATP and magnesium. alpha-casein is the usual test substrate. In the absence of ATP, only oligopeptides shorter than five residues are hydrolyzed (such as succinyl-Leu-Tyr-|-NHMec, and Leu-Tyr-Leu-|-Tyr-Trp, in which cleavage of the -Tyr-|-Leu- and -Tyr-|-Trp bonds also occurs).. Functionally, cleaves peptides in various proteins in a process that requires ATP hydrolysis. Has a chymotrypsin-like activity. Plays a major role in the degradation of misfolded proteins. The chain is ATP-dependent Clp protease proteolytic subunit from Shewanella baltica (strain OS223).